The following is a 162-amino-acid chain: ATP synthase subunit b (162 aa).

A helical transmembrane segment spans residues 6–26 (PDIGLLFWMLLSFGIVFFVAA).

The protein belongs to the ATPase B chain family. As to quaternary structure, F-type ATPases have 2 components, F(1) - the catalytic core - and F(0) - the membrane proton channel. F(1) has five subunits: alpha(3), beta(3), gamma(1), delta(1), epsilon(1). F(0) has three main subunits: a(1), b(2) and c(10-14). The alpha and beta chains form an alternating ring which encloses part of the gamma chain. F(1) is attached to F(0) by a central stalk formed by the gamma and epsilon chains, while a peripheral stalk is formed by the delta and b chains.

The protein resides in the cell inner membrane. Functionally, f(1)F(0) ATP synthase produces ATP from ADP in the presence of a proton or sodium gradient. F-type ATPases consist of two structural domains, F(1) containing the extramembraneous catalytic core and F(0) containing the membrane proton channel, linked together by a central stalk and a peripheral stalk. During catalysis, ATP synthesis in the catalytic domain of F(1) is coupled via a rotary mechanism of the central stalk subunits to proton translocation. Component of the F(0) channel, it forms part of the peripheral stalk, linking F(1) to F(0). The polypeptide is ATP synthase subunit b (Azobacteroides pseudotrichonymphae genomovar. CFP2).